The following is a 386-amino-acid chain: Na(+)/H(+) antiporter NhaA (386 aa).

The next 11 helical transmembrane spans lie at 10–30, 58–78, 94–114, 124–144, 154–174, 176–196, 199–219, 253–273, 283–303, 327–347, and 361–381; these read MGSA…IFAN, LLHW…GLEV, IFPA…YYLI, GWAI…ALLG, FLLA…AVFF, EELS…LITL, MKVG…AAVL, ILTP…NAGV, IFST…PLGV, VFAI…LAGL, and LSRL…YLLL.

Belongs to the NhaA Na(+)/H(+) (TC 2.A.33) antiporter family.

It is found in the cell inner membrane. It carries out the reaction Na(+)(in) + 2 H(+)(out) = Na(+)(out) + 2 H(+)(in). Its function is as follows. Na(+)/H(+) antiporter that extrudes sodium in exchange for external protons. This Mannheimia succiniciproducens (strain KCTC 0769BP / MBEL55E) protein is Na(+)/H(+) antiporter NhaA.